The primary structure comprises 342 residues: MADDLEQQSQGWLSSWLPTWRPTSMSQLKNVEARILQCLQNKFLARYVSLPNQNKIWTVTVSPEQNDRTPLVMVHGFGGGVGLWILNMDSLSARRTLHTFDLLGFGRSSRPAFPRDPEGAEDEFVTSIETWRETMGIPSMILLGHSLGGFLATSYSIKYPDRVKHLILVDPWGFPLRPTNPSEIRAPPAWVKAVASVLGRSNPLAVLRVAGPWGPGLVQRFRPDFKRKFADFFEDDTISEYIYHCNAQNPSGETAFKAMMESFGWARRPMLERIHLIRKDVPITMIYGSDTWIDTSTGKKVKMQRPDSYVRDMEIKGASHHVYADQPHIFNAVVEEICDSVD.

The 132-residue stretch at 70 to 201 folds into the AB hydrolase-1 domain; that stretch reads PLVMVHGFGG…KAVASVLGRS (132 aa).

Belongs to the peptidase S33 family. ABHD4/ABHD5 subfamily.

It carries out the reaction N-hexadecanoyl-1,2-di-(9Z-octadecenoyl)-sn-glycero-3-phosphoethanolamine + H2O = N-hexadecanoyl-1-(9Z-octadecenoyl)-sn-glycero-3-phosphoethanolamine + (9Z)-octadecenoate + H(+). The enzyme catalyses an N-acyl-1,2-diacyl-sn-glycero-3-phosphoethanolamine + H2O = N,1-diacyl-sn-glycero-3-phosphoethanolamine + a fatty acid + H(+). It catalyses the reaction N-hexadecanoyl-1-(9Z-octadecenoyl)-sn-glycero-3-phosphoethanolamine + H2O = N-hexadecanoyl-sn-glycero-3-phosphoethanolamine + (9Z)-octadecenoate + H(+). The catalysed reaction is N-octadecanoyl-1-(9Z-octadecenoyl)-sn-glycero-3-phosphoethanolamine + H2O = N-octadecanoyl-sn-glycero-3-phospho-ethanolamine + (9Z)-octadecenoate + H(+). It carries out the reaction N-eicosanoyl-1-(9Z-octadecenoyl)-sn-glycero-3-phosphoethanolamine + H2O = N-eicosanoyl-sn-glycero-3-phosphoethanolamine + (9Z)-octadecenoate + H(+). The enzyme catalyses N,1-di-(9Z-octadecenoyl)-sn-glycero-3-phosphoethanolamine + H2O = N-(9Z-octadecenoyl)-sn-glycero-3-phosphoethanolamine + (9Z)-octadecenoate + H(+). It catalyses the reaction N-(5Z,8Z,11Z,14Z-eicosatetraenoyl)-1-(9Z-octadecenoyl)-sn-glycero-3-phosphoethanolamine + H2O = N-(5Z,8Z,11Z,14Z-eicosatetraenoyl)-sn-glycero-3-phosphoethanolamine + (9Z)-octadecenoate + H(+). The catalysed reaction is 1-octadecanoyl-2-(9Z-octadecenoyl)-sn-glycero-3-phospho-(N-hexadecanoyl)-serine + H2O = 1-octadecanoyl-2-hydroxy-sn-glycero-3-phospho-(N-hexadecanoyl)-serine + (9Z)-octadecenoate + H(+). It carries out the reaction 1-O-(1Z-octadecenoyl)-2-(9Z-octadecenoyl)-sn-glycero-3-phospho-N-hexadecanoyl-ethanolamine + H2O = 1-O-(1Z-octadecenyl)-sn-glycero-3-phospho-N-hexadecanoyl-ethanolamine + (9Z)-octadecenoate + H(+). The enzyme catalyses N,1-diacyl-sn-glycero-3-phosphoethanolamine + H2O = N-acyl-sn-glycero-3-phosphoethanolamine + a fatty acid + H(+). Lysophospholipase selective for N-acyl phosphatidylethanolamine (NAPE). Contributes to the biosynthesis of N-acyl ethanolamines, including the endocannabinoid anandamide by hydrolyzing the sn-1 and sn-2 acyl chains from N-acyl phosphatidylethanolamine (NAPE) generating glycerophospho-N-acyl ethanolamine (GP-NAE), an intermediate for N-acyl ethanolamine biosynthesis. Hydrolyzes substrates bearing saturated, monounsaturated, polyunsaturated N-acyl chains. Shows no significant activity towards other lysophospholipids, including lysophosphatidylcholine, lysophosphatidylethanolamine and lysophosphatidylserine. The sequence is that of (Lyso)-N-acylphosphatidylethanolamine lipase from Homo sapiens (Human).